The sequence spans 399 residues: tRNA-specific 2-thiouridylase MnmA (399 aa).

ATP-binding positions include 21-28 (AMSGGVDS) and L47. C115 serves as the catalytic Nucleophile. The cysteines at positions 115 and 211 are disulfide-linked. ATP is bound at residue G139. The interaction with tRNA stretch occupies residues 161-163 (RDQ). C211 functions as the Cysteine persulfide intermediate in the catalytic mechanism.

This sequence belongs to the MnmA/TRMU family.

Its subcellular location is the cytoplasm. It catalyses the reaction S-sulfanyl-L-cysteinyl-[protein] + uridine(34) in tRNA + AH2 + ATP = 2-thiouridine(34) in tRNA + L-cysteinyl-[protein] + A + AMP + diphosphate + H(+). In terms of biological role, catalyzes the 2-thiolation of uridine at the wobble position (U34) of tRNA, leading to the formation of s(2)U34. The polypeptide is tRNA-specific 2-thiouridylase MnmA (Parvibaculum lavamentivorans (strain DS-1 / DSM 13023 / NCIMB 13966)).